A 548-amino-acid polypeptide reads, in one-letter code: Glutamate--tRNA ligase (548 aa).

The 'HIGH' region motif lies at 102–112; sequence PSPSGPLHIGH.

It belongs to the class-I aminoacyl-tRNA synthetase family. Glutamate--tRNA ligase type 2 subfamily.

The protein localises to the cytoplasm. The enzyme catalyses tRNA(Glu) + L-glutamate + ATP = L-glutamyl-tRNA(Glu) + AMP + diphosphate. In terms of biological role, catalyzes the attachment of glutamate to tRNA(Glu) in a two-step reaction: glutamate is first activated by ATP to form Glu-AMP and then transferred to the acceptor end of tRNA(Glu). In Thermoplasma acidophilum (strain ATCC 25905 / DSM 1728 / JCM 9062 / NBRC 15155 / AMRC-C165), this protein is Glutamate--tRNA ligase.